Here is a 197-residue protein sequence, read N- to C-terminus: 7-methyl-GTP pyrophosphatase (197 aa).

D72 functions as the Proton acceptor in the catalytic mechanism.

The protein belongs to the Maf family. YceF subfamily. A divalent metal cation serves as cofactor.

It is found in the cytoplasm. The enzyme catalyses N(7)-methyl-GTP + H2O = N(7)-methyl-GMP + diphosphate + H(+). Nucleoside triphosphate pyrophosphatase that hydrolyzes 7-methyl-GTP (m(7)GTP). May have a dual role in cell division arrest and in preventing the incorporation of modified nucleotides into cellular nucleic acids. This Bordetella avium (strain 197N) protein is 7-methyl-GTP pyrophosphatase.